We begin with the raw amino-acid sequence, 265 residues long: UPF0246 protein NT01EI_0662 (265 aa).

Belongs to the UPF0246 family.

In Edwardsiella ictaluri (strain 93-146), this protein is UPF0246 protein NT01EI_0662.